The chain runs to 1111 residues: Nuclear migration and anchoring protein unc-84 (1111 aa).

Residues 1-509 (MAPATEADNN…LTDKKSSKFS (509 aa)) are Nuclear-facing. Required for nuclear envelope localization regions lie at residues 118–244 (YILR…SQTL) and 503–507 (KKSSK). Residues 232–253 (ERASRMTTRSQTLERSRKFDGL) form a disordered region. Over residues 243–252 (TLERSRKFDG) the composition is skewed to basic and acidic residues. The helical transmembrane segment at 510–530 (WCQILGLLLALLFAIFLLGFL) threads the bilayer. Residues 531–1111 (TSDNTAIRVK…LRVHGKVVQV (581 aa)) are Perinuclear space-facing. An interaction with zyg-12 region spans residues 912–1111 (QYDKNHLEAI…LRVHGKVVQV (200 aa)). An SUN domain is found at 945 to 1109 (GGAVVSTRCS…YRLRVHGKVV (165 aa)).

As to quaternary structure, component of the unc-83-unc-84 LINC complex which contains at least unc-83 and unc-84. Within the unc-83-unc-84 LINC complex interacts (via C-terminus) with unc-83; the interaction is probably required to recruit unc-83 to the nuclear membrane. Most likely interacts with anc-1; the interaction is probably required to recruit anc-1 to the nuclear envelope. Interacts (via C-terminus) with zyg-12 (via C-terminus); the interaction is direct. May interact with lmn-1; this interaction may be required to complete the connection between the nuclear lamina and the cytoskeleton. In terms of tissue distribution, expressed in all somatic cells. Not expressed in germ cells in the mitotic and transition zones of the gonad. One study shows expression at the beginning of the late pachytene stage in the proximal gonad, but there is no expression in the male germline, suggesting expression is specific to oogenesis in hermaphrodites.

The protein localises to the nucleus inner membrane. It is found in the cytoplasm. It localises to the cytoskeleton. Involved in nuclear migration and anchoring in hypodermal precursor cells. Most likely recruits anc-1 to the nuclear envelope where anc-1 functions to tether the nucleus to the actin cytoskeleton. Component of the unc-83-unc-84 LINC (LInker of Nucleoskeleton and Cytoskeleton) complex where it recruits and interacts with unc-83 to form a bridge connecting the nuclear envelope to the cytoskeleton which allows for nuclear transport along microtubules. Its role in nuclear migration may be in association with lamin, lmn-1. Regulates nuclear migrations in one-cell embryos, controlling the posterior migration of the male pronucleus following fertilization. Not required for centrosome attachment to the nucleus. Plays a role in the maintenance of the nuclear envelope architecture in body wall muscle cells. May be involved in DNA damage repair through an association with zyg-12. Potentially has roles in homologous recombination, double strand break repair and meiotic recombination. Specifically, may in part inhibit non-homologous end joining repair, most likely through recruiting fan-1 to the nucleoplasm, to facilitate the repair of DNA cross-links. The polypeptide is Nuclear migration and anchoring protein unc-84 (Caenorhabditis elegans).